Reading from the N-terminus, the 496-residue chain is Polyamine oxidase 6 (496 aa).

Positions 1 to 27 are cleaved as a signal peptide; that stretch reads MTKPTTMAIFLVLALSIAQLLPSLVAG. The FAD site is built by Glu-61 and Arg-69. Asn-103 and Asn-150 each carry an N-linked (GlcNAc...) asparagine glycan. Val-261 is an FAD binding site. A glycan (N-linked (GlcNAc...) asparagine) is linked at Asn-278. Glu-454 lines the FAD pocket.

The protein belongs to the flavin monoamine oxidase family. FAD is required as a cofactor.

It is found in the secreted. Its subcellular location is the extracellular space. The protein localises to the apoplast. Its pathway is amine and polyamine degradation; spermine degradation. Flavoenzyme involved in polyamine back-conversion. Catalyzes the oxidation of the secondary amino group of polyamines, such as spermine and spermidine. This is Polyamine oxidase 6 from Oryza sativa subsp. japonica (Rice).